We begin with the raw amino-acid sequence, 306 residues long: D-alanine--D-alanine ligase B (306 aa).

Active-site residues include Glu15 and Ser150. In terms of domain architecture, ATP-grasp spans 101 to 303 (KLLWQGAGLP…FSQLVVRILE (203 aa)). Position 134 to 189 (134 to 189 (ISALGLPVIVKPSREGSSVGMSKVVAENALQDALRLAFQHDEEVLIEKWLSGPEFT)) interacts with ATP. Mg(2+) contacts are provided by Asp257, Glu270, and Asn272. The active site involves Ser281.

This sequence belongs to the D-alanine--D-alanine ligase family. In terms of assembly, monomer. Requires Mg(2+) as cofactor. It depends on Mn(2+) as a cofactor.

It is found in the cytoplasm. It carries out the reaction 2 D-alanine + ATP = D-alanyl-D-alanine + ADP + phosphate + H(+). The protein operates within cell wall biogenesis; peptidoglycan biosynthesis. In terms of biological role, cell wall formation. In Escherichia coli (strain K12), this protein is D-alanine--D-alanine ligase B (ddlB).